A 204-amino-acid polypeptide reads, in one-letter code: Putative AgrB-like protein (204 aa).

Helical transmembrane passes span 52 to 74 (YGIALVTGLLLQTVTVHLSYLWL), 87 to 107 (LNCTLISLMMFVLAPFVFQNI), 111 to 131 (NWIVLGTFGFILLNMFLFAPA), and 156 to 176 (LILTGIALLIPFAEMKTLIMV).

It belongs to the AgrB family.

It localises to the cell membrane. Its function is as follows. May be involved in the proteolytic processing of a quorum sensing system signal molecule precursor. In Listeria monocytogenes serotype 4b (strain CLIP80459), this protein is Putative AgrB-like protein.